The primary structure comprises 202 residues: Ras-related protein Rab-18 (202 aa).

Positions 18, 21, 22, 23, 24, 35, 36, 41, 67, 124, 126, and 153 each coordinate GTP. The Effector region motif lies at 38-46 (QAATIGVDF). S-geranylgeranyl cysteine attachment occurs at residues Cys198 and Cys200.

The protein belongs to the small GTPase superfamily. Rab family.

It is found in the cell membrane. The catalysed reaction is GTP + H2O = GDP + phosphate + H(+). Functionally, the small GTPases Rab are key regulators of intracellular membrane trafficking, from the formation of transport vesicles to their fusion with membranes. Rabs cycle between an inactive GDP-bound form and an active GTP-bound form that is able to recruit to membranes different sets of downstream effectors directly responsible for vesicle formation, movement, tethering and fusion. In Lymnaea stagnalis (Great pond snail), this protein is Ras-related protein Rab-18 (RAB18A).